The following is a 469-amino-acid chain: Ribulose bisphosphate carboxylase large chain (469 aa).

Positions Met1 to Ser2 are excised as a propeptide. Pro3 carries the post-translational modification N-acetylproline. The residue at position 14 (Lys14) is an N6,N6,N6-trimethyllysine. The substrate site is built by Asn123 and Thr173. Lys175 acts as the Proton acceptor in catalysis. Substrate is bound at residue Lys177. The Mg(2+) site is built by Lys201, Asp203, and Glu204. The residue at position 201 (Lys201) is an N6-carboxylysine. Catalysis depends on His294, which acts as the Proton acceptor. Substrate contacts are provided by Arg295, His327, and Ser379.

The protein belongs to the RuBisCO large chain family. Type I subfamily. As to quaternary structure, heterohexadecamer of 8 large chains and 8 small chains; disulfide-linked. The disulfide link is formed within the large subunit homodimers. It depends on Mg(2+) as a cofactor. The disulfide bond which can form in the large chain dimeric partners within the hexadecamer appears to be associated with oxidative stress and protein turnover.

The protein resides in the plastid. Its subcellular location is the chloroplast. The catalysed reaction is 2 (2R)-3-phosphoglycerate + 2 H(+) = D-ribulose 1,5-bisphosphate + CO2 + H2O. The enzyme catalyses D-ribulose 1,5-bisphosphate + O2 = 2-phosphoglycolate + (2R)-3-phosphoglycerate + 2 H(+). Its function is as follows. RuBisCO catalyzes two reactions: the carboxylation of D-ribulose 1,5-bisphosphate, the primary event in carbon dioxide fixation, as well as the oxidative fragmentation of the pentose substrate in the photorespiration process. Both reactions occur simultaneously and in competition at the same active site. In Brexia madagascariensis, this protein is Ribulose bisphosphate carboxylase large chain.